Reading from the N-terminus, the 275-residue chain is 4-diphosphocytidyl-2-C-methyl-D-erythritol kinase (275 aa).

Lysine 9 is an active-site residue. 90 to 100 (PVGGGLGGGSS) provides a ligand contact to ATP. The active site involves aspartate 132.

This sequence belongs to the GHMP kinase family. IspE subfamily.

The catalysed reaction is 4-CDP-2-C-methyl-D-erythritol + ATP = 4-CDP-2-C-methyl-D-erythritol 2-phosphate + ADP + H(+). It functions in the pathway isoprenoid biosynthesis; isopentenyl diphosphate biosynthesis via DXP pathway; isopentenyl diphosphate from 1-deoxy-D-xylulose 5-phosphate: step 3/6. In terms of biological role, catalyzes the phosphorylation of the position 2 hydroxy group of 4-diphosphocytidyl-2C-methyl-D-erythritol. The chain is 4-diphosphocytidyl-2-C-methyl-D-erythritol kinase from Sulfurihydrogenibium sp. (strain YO3AOP1).